Reading from the N-terminus, the 202-residue chain is Na(+)-translocating NADH-quinone reductase subunit E (202 aa).

Helical transmembrane passes span 11–31 (SVFVKNMALAYFLGMCTFLAI), 35–55 (IDAAIGLGIAVVVVLTITVPV), 81–101 (FLGLICYIGVIAAIVQIMEMV), 114–134 (GVFLPLITVNCAILGAALLMV), 144–164 (VVFGVGSGVGWAFAIVALAGI), and 182–202 (ITFITVGLMSLGFMSFGGIAL).

Belongs to the NqrDE/RnfAE family. Composed of six subunits; NqrA, NqrB, NqrC, NqrD, NqrE and NqrF.

The protein resides in the cell inner membrane. It carries out the reaction a ubiquinone + n Na(+)(in) + NADH + H(+) = a ubiquinol + n Na(+)(out) + NAD(+). In terms of biological role, NQR complex catalyzes the reduction of ubiquinone-1 to ubiquinol by two successive reactions, coupled with the transport of Na(+) ions from the cytoplasm to the periplasm. NqrA to NqrE are probably involved in the second step, the conversion of ubisemiquinone to ubiquinol. This chain is Na(+)-translocating NADH-quinone reductase subunit E, found in Saccharophagus degradans (strain 2-40 / ATCC 43961 / DSM 17024).